Here is a 72-residue protein sequence, read N- to C-terminus: Heat-stable enterotoxin ST-IA/ST-P (72 aa).

The signal sequence occupies residues 1–19 (MKKLMLAIFISVLSFPSFS). The propeptide occupies 20–54 (QSTESLDSSKEKITLETKKCDVVKNNSEKKSENMN). Cystine bridges form between cysteine 59-cysteine 64, cysteine 60-cysteine 68, and cysteine 63-cysteine 71.

The protein belongs to the heat-stable enterotoxin family.

Its subcellular location is the secreted. Toxin which activates the particulate form of guanylate cyclase and increases cyclic GMP levels within the host intestinal epithelial cells. The chain is Heat-stable enterotoxin ST-IA/ST-P (sta1) from Escherichia coli.